We begin with the raw amino-acid sequence, 679 residues long: UvrABC system protein B (679 aa).

Residues 25-190 (EGVNQGQRYQ…SRNDFDITRG (166 aa)) enclose the Helicase ATP-binding domain. Position 38–45 (38–45 (GATGTGKT)) interacts with ATP. The short motif at 91–114 (YYDYYQPEAYVPVSDTYIAKTASI) is the Beta-hairpin element. The region spanning 429–591 (QVDDLLAEIR…IVPRPAGKRA (163 aa)) is the Helicase C-terminal domain. One can recognise a UVR domain in the interval 639–674 (PELIDQLETKMKEAAKNLNFEEAASLRDRIKKFRQK).

The protein belongs to the UvrB family. In terms of assembly, forms a heterotetramer with UvrA during the search for lesions. Interacts with UvrC in an incision complex.

Its subcellular location is the cytoplasm. In terms of biological role, the UvrABC repair system catalyzes the recognition and processing of DNA lesions. A damage recognition complex composed of 2 UvrA and 2 UvrB subunits scans DNA for abnormalities. Upon binding of the UvrA(2)B(2) complex to a putative damaged site, the DNA wraps around one UvrB monomer. DNA wrap is dependent on ATP binding by UvrB and probably causes local melting of the DNA helix, facilitating insertion of UvrB beta-hairpin between the DNA strands. Then UvrB probes one DNA strand for the presence of a lesion. If a lesion is found the UvrA subunits dissociate and the UvrB-DNA preincision complex is formed. This complex is subsequently bound by UvrC and the second UvrB is released. If no lesion is found, the DNA wraps around the other UvrB subunit that will check the other stand for damage. This Prochlorococcus marinus (strain MIT 9303) protein is UvrABC system protein B.